Reading from the N-terminus, the 419-residue chain is Divinyl chlorophyllide a 8-vinyl-reductase, chloroplastic (419 aa).

The transit peptide at Met1–Val71 directs the protein to the chloroplast.

It is found in the plastid. The protein resides in the chloroplast. It carries out the reaction protochlorophyllide a + NADP(+) = 3,8-divinyl protochlorophyllide a + NADPH + H(+). It functions in the pathway porphyrin-containing compound metabolism; chlorophyll biosynthesis. Catalyzes the conversion of divinyl chlorophyllide to monovinyl chlorophyllide. Reduces the 8-vinyl group of the tetrapyrrole to an ethyl group using NADPH as the reductant. The best substrate is (3,8-divinyl)-chlorophyllide a (DV-Chlidea). Very low activity with (3,8-divinyl)-protochlorophyllide a (DV-Pchlidea) and (3,8-divinyl)-magnesium-protoporphyrin IX monomethyl ester (DV-MPE). No activity with (3,8-divinyl)-magnesium-protoporphyrin IX (DV-Mg-Proto) and (3,8-divinyl)-chlorophyll a (DV-Chla). The sequence is that of Divinyl chlorophyllide a 8-vinyl-reductase, chloroplastic (DVR) from Cucumis sativus (Cucumber).